The primary structure comprises 58 residues: Transactivator protein ORF121 (58 aa).

Stimulates the expression of 39k gene most probably by increasing IE1 expression. The polypeptide is Transactivator protein ORF121 (AC121) (Lepidoptera (butterflies and moths)).